The primary structure comprises 359 residues: Double-stranded RNA-binding protein 3 (359 aa).

DRBM domains are found at residues 1 to 70 (MYKN…ALSS) and 87 to 155 (IYKN…SLRK). The segment covering 266-280 (EKKQSLDDPKPEMRI) has biased composition (basic and acidic residues). Disordered regions lie at residues 266–292 (EKKQ…SSSV) and 328–359 (APPP…SLPN). Residues 328–338 (APPPKPNPNPN) are compositionally biased toward pro residues.

Its function is as follows. Binds double-stranded RNA. The polypeptide is Double-stranded RNA-binding protein 3 (DRB3) (Arabidopsis thaliana (Mouse-ear cress)).